The chain runs to 408 residues: Succinylornithine transaminase (408 aa).

At lysine 252 the chain carries N6-(pyridoxal phosphate)lysine.

It belongs to the class-III pyridoxal-phosphate-dependent aminotransferase family. AstC subfamily. Pyridoxal 5'-phosphate serves as cofactor.

The enzyme catalyses N(2)-succinyl-L-ornithine + 2-oxoglutarate = N-succinyl-L-glutamate 5-semialdehyde + L-glutamate. It participates in amino-acid degradation; L-arginine degradation via AST pathway; L-glutamate and succinate from L-arginine: step 3/5. In terms of biological role, catalyzes the transamination of N(2)-succinylornithine and alpha-ketoglutarate into N(2)-succinylglutamate semialdehyde and glutamate. Can also act as an acetylornithine aminotransferase. This is Succinylornithine transaminase from Salmonella dublin (strain CT_02021853).